The sequence spans 83 residues: Putative membrane protein insertion efficiency factor (83 aa).

The segment at 63–83 is disordered; that stretch reads GGNDPVPDHFSLRRNKTDISD. Over residues 68–83 the composition is skewed to basic and acidic residues; the sequence is VPDHFSLRRNKTDISD.

It belongs to the UPF0161 family.

The protein resides in the cell membrane. Its function is as follows. Could be involved in insertion of integral membrane proteins into the membrane. In Streptococcus agalactiae serotype Ia (strain ATCC 27591 / A909 / CDC SS700), this protein is Putative membrane protein insertion efficiency factor.